The following is a 362-amino-acid chain: DNA replication and repair protein RecF (362 aa).

30–37 (GPNGSGKT) is a binding site for ATP.

The protein belongs to the RecF family.

The protein resides in the cytoplasm. Its function is as follows. The RecF protein is involved in DNA metabolism; it is required for DNA replication and normal SOS inducibility. RecF binds preferentially to single-stranded, linear DNA. It also seems to bind ATP. The chain is DNA replication and repair protein RecF from Proteus mirabilis (strain HI4320).